Consider the following 236-residue polypeptide: MATPHINAVEGAFAETVLFPGDPLRAKYIAETFLENVEQVTDVRNMLGFTGTYKGKRISVMGSGMGIPSCSIYATELIKDYGVKNLIRVGTCGAISTDVKVRDVIIGMGACTDSQVNRLRFKGQDFAAIANYELMNAVIESAKVKGTKIRVGNVFSADLFYTPDPQMFDVMEKMGVLGVEMEAAGLYGVAHEFGARALCVVTVSDHIRTGEKTTSEERQTTFNDMIVMTLDAAITL.

An a purine D-ribonucleoside-binding site is contributed by histidine 5. Residues glycine 21, arginine 25, arginine 44, and 88–91 (RVGT) each bind phosphate. Residues 180–182 (EME) and 204–205 (SD) contribute to the a purine D-ribonucleoside site. Aspartate 205 functions as the Proton donor in the catalytic mechanism.

It belongs to the PNP/UDP phosphorylase family. Homohexamer; trimer of homodimers.

The enzyme catalyses a purine D-ribonucleoside + phosphate = a purine nucleobase + alpha-D-ribose 1-phosphate. It catalyses the reaction a purine 2'-deoxy-D-ribonucleoside + phosphate = a purine nucleobase + 2-deoxy-alpha-D-ribose 1-phosphate. In terms of biological role, catalyzes the reversible phosphorolytic breakdown of the N-glycosidic bond in the beta-(deoxy)ribonucleoside molecules, with the formation of the corresponding free purine bases and pentose-1-phosphate. This Shewanella oneidensis (strain ATCC 700550 / JCM 31522 / CIP 106686 / LMG 19005 / NCIMB 14063 / MR-1) protein is Purine nucleoside phosphorylase DeoD-type 2.